The following is a 651-amino-acid chain: DNA endonuclease RBBP8 (651 aa).

2 coiled-coil regions span residues 35–84 (LQEL…EDRL) and 117–138 (ISEL…SLEL). Disordered regions lie at residues 138–199 (LERL…PESR), 363–433 (NGRL…EHQA), and 487–539 (YESC…SDKS). A compositionally biased stretch (polar residues) spans 363–379 (NGRLQSKNQETSEIETT). The segment covering 380-391 (QDSKKKCLDGHT) has biased composition (basic and acidic residues). Over residues 503 to 515 (VYEEEREEDDPEE) the composition is skewed to acidic residues. The segment covering 525–539 (RPADRKPLVSDSDKS) has biased composition (basic and acidic residues). 2 positions are modified to phosphothreonine: T599 and T611.

It belongs to the COM1/SAE2/CtIP family. In terms of assembly, homotetramer; formed by antiparallel association of helical extensions protruding from the N-termini of two parallel coiled-coil dimers. Interacts with the MRN complex; the interaction links DNA sensing to resection. Interacts with samhd1. In terms of processing, phosphorylation at Thr-599 and Thr-611 promote interaction with nbn and recruitment to double-strand breaks (DSBs).

The protein localises to the nucleus. The protein resides in the chromosome. Its function is as follows. Endonuclease that cooperates with the MRE11-RAD50-NBN (MRN) complex in DNA-end resection, the first step of double-strand break (DSB) repair through the homologous recombination (HR) pathway. Functions downstream of the MRN complex and ATM, promotes ATR activation and its recruitment to DSBs in the S/G2 phase facilitating the generation of ssDNA. Specifically promotes the endonuclease activity of the MRN complex to clear DNA ends containing protein adducts: recruited to DSBs by nbn following phosphorylation, and promotes the endonuclease of mre11 to clear protein-DNA adducts and generate clean double-strand break ends. In Danio rerio (Zebrafish), this protein is DNA endonuclease RBBP8 (rbbp8).